The primary structure comprises 616 residues: MKQSKMLIPTLREMPSDAQVISHALLMRAGYVRQVSAGIYAYLPLANRVLEKLKNIMREEFDEIGAVELLAPSLLTADLWRESGRYDTYGEDLYKLKNRDNSDFILGPTHEETMTSLVRDEITSYKKLPLNVYQIAPKFRDEKRPRYGLLRGREFLMKDGYSYHADQDSLDETYNDYKKAYEKIFERAGLNFKPIIADAGAMGGKDSQEFIAITDDRINLEKWLVLSKNITSIEEIPESVLSEIKEELGKWLIAGEDTIVYAEGGDYAANIEMASSQFEPNVAYTEELELEKVATPGAKTIDEVSKFLEIDEEQTVKTLVYHADDELVVVLLNGNDQLNEVKLTNYLGASFIEAASEAEVEEKFGAHFGSLGPIGLENVKIIADRKVEQIKNAVVGANVDGFHYKNANFGRDYEVEEFVDLRTVNEGEISPDGRGTLKFARGIEIGHIFKLGTRYTEAMNANILDANGRSIPMLMGCYGIGVSRLLSAILEQFARIYVEKTPREEFKFSWSINFPKELAPFDIHLVPVNVKDEAAMELTSELEEKLRGKGYQVLVDDRNERAGVKFADSDLIGLPVRVTIGKKAAEGVVEVKIRATGEVVEINKDELVNTIEILSK.

The protein belongs to the class-II aminoacyl-tRNA synthetase family. ProS type 1 subfamily. Homodimer.

Its subcellular location is the cytoplasm. The enzyme catalyses tRNA(Pro) + L-proline + ATP = L-prolyl-tRNA(Pro) + AMP + diphosphate. Functionally, catalyzes the attachment of proline to tRNA(Pro) in a two-step reaction: proline is first activated by ATP to form Pro-AMP and then transferred to the acceptor end of tRNA(Pro). As ProRS can inadvertently accommodate and process non-cognate amino acids such as alanine and cysteine, to avoid such errors it has two additional distinct editing activities against alanine. One activity is designated as 'pretransfer' editing and involves the tRNA(Pro)-independent hydrolysis of activated Ala-AMP. The other activity is designated 'posttransfer' editing and involves deacylation of mischarged Ala-tRNA(Pro). The misacylated Cys-tRNA(Pro) is not edited by ProRS. This is Proline--tRNA ligase from Lactococcus lactis subsp. lactis (strain IL1403) (Streptococcus lactis).